The sequence spans 904 residues: DNA mismatch repair protein MutS (904 aa).

Residue 638–645 (GPNMAGKS) participates in ATP binding. Residues 825–869 (KSKADGTRRPASYHEAQPLLPGMPEPPSTASAEPPQTVTPPEPPV) form a disordered region.

This sequence belongs to the DNA mismatch repair MutS family.

In terms of biological role, this protein is involved in the repair of mismatches in DNA. It is possible that it carries out the mismatch recognition step. This protein has a weak ATPase activity. The protein is DNA mismatch repair protein MutS of Oleidesulfovibrio alaskensis (strain ATCC BAA-1058 / DSM 17464 / G20) (Desulfovibrio alaskensis).